We begin with the raw amino-acid sequence, 236 residues long: Class B acid phosphatase (236 aa).

Positions 1-22 are cleaved as a signal peptide; it reads MNHTLRSITLVLACVASLSANA. D70 (nucleophile) is an active-site residue. Residues D70 and D72 each coordinate Mg(2+). D72 functions as the Proton donor in the catalytic mechanism. Substrate contacts are provided by residues 138–139 and K176; that span reads TG. Position 191 (D191) interacts with Mg(2+).

It belongs to the class B bacterial acid phosphatase family. Homotetramer. Requires Mg(2+) as cofactor.

Its subcellular location is the periplasm. The enzyme catalyses a phosphate monoester + H2O = an alcohol + phosphate. Dephosphorylates several organic phosphate monoesters. Also has a phosphotransferase activity catalyzing the transfer of low-energy phosphate groups from organic phosphate monoesters to free hydroxyl groups of various organic compounds. The protein is Class B acid phosphatase of Marinomonas sp. (strain MWYL1).